The primary structure comprises 47 residues: Delta-stichotoxin-Hcr1d (47 aa).

Disulfide bonds link C3–C43, C5–C33, and C26–C44.

This sequence belongs to the sea anemone sodium channel inhibitory toxin family. Type II subfamily.

It localises to the secreted. Its subcellular location is the nematocyst. In terms of biological role, binds to site 3 of voltage-gated sodium channels and inhibits the inactivation process. The sequence is that of Delta-stichotoxin-Hcr1d from Radianthus crispa (Leathery sea anemone).